Reading from the N-terminus, the 314-residue chain is Homeobox protein DBX1-A (314 aa).

Positions 175–234 (GMLRRAVFSDVQRKALEKMFQKQKYISKPDRKKLAAKLGLKDSQVKIWFQNRRMKWRNSK) form a DNA-binding region, homeobox. Disordered regions lie at residues 234–279 (KERE…CAPS) and 292–314 (STDS…ITVS). A compositionally biased stretch (basic and acidic residues) spans 258-267 (DLSDVGKKSS). Residues 305-314 (SESEDEITVS) are compositionally biased toward acidic residues.

Belongs to the H2.0 homeobox family.

It is found in the nucleus. In Danio rerio (Zebrafish), this protein is Homeobox protein DBX1-A (dbx1a).